Here is a 351-residue protein sequence, read N- to C-terminus: Molybdate-binding protein MolA (351 aa).

The first 21 residues, 1–21 (MKLKSLLIACLLSSLSFSALA), serve as a signal peptide directing secretion. In terms of domain architecture, Fe/B12 periplasmic-binding spans 41–322 (RAVVLQHQTL…WLAKALYPQR (282 aa)). Molybdate is bound by residues 47–48 (HQ), tyrosine 217, arginine 264, and 300–301 (GY).

It belongs to the bacterial solute-binding protein 8 family. The complex is composed of two ATP-binding proteins (MolC), two transmembrane proteins (MolB) and a solute-binding protein (MolA).

The protein resides in the periplasm. Its activity is regulated as follows. The MolBCA complex shows a decrease in affinity in the presence of increasing concentrations of substrate and nucleotide. Functionally, part of the ABC transporter complex MolBCA involved in molybdate import. Functions as a low-affinity molybdate transporter. Binds to both molybdate and tungstate, but not to sulfate or phosphate. This Haemophilus influenzae (strain ATCC 51907 / DSM 11121 / KW20 / Rd) protein is Molybdate-binding protein MolA.